Consider the following 422-residue polypeptide: L-threonine dehydratase biosynthetic IlvA (422 aa).

The residue at position 56 (Lys-56) is an N6-(pyridoxal phosphate)lysine. Pyridoxal 5'-phosphate-binding positions include Asn-83, 189-193, and Ser-315; that span reads GGGGL. The 75-residue stretch at 339–413 folds into the ACT-like domain; sequence HYFILNFPQR…FDPSNIYINE (75 aa).

Belongs to the serine/threonine dehydratase family. Homotetramer. Pyridoxal 5'-phosphate is required as a cofactor.

It catalyses the reaction L-threonine = 2-oxobutanoate + NH4(+). It participates in amino-acid biosynthesis; L-isoleucine biosynthesis; 2-oxobutanoate from L-threonine: step 1/1. Its function is as follows. Catalyzes the anaerobic formation of alpha-ketobutyrate and ammonia from threonine in a two-step reaction. The first step involved a dehydration of threonine and a production of enamine intermediates (aminocrotonate), which tautomerizes to its imine form (iminobutyrate). Both intermediates are unstable and short-lived. The second step is the nonenzymatic hydrolysis of the enamine/imine intermediates to form 2-ketobutyrate and free ammonia. In the low water environment of the cell, the second step is accelerated by RidA. In Staphylococcus aureus (strain MSSA476), this protein is L-threonine dehydratase biosynthetic IlvA (ilvA).